The chain runs to 652 residues: Putative ankyrin repeat protein R734 (652 aa).

ANK repeat units follow at residues 77–105 (TNDI…ANNS), 106–136 (EGIK…LPTE), 138–167 (TLRD…HLGY), 192–219 (NDLK…SGYE), 220–242 (FDNR…FFMD), 243–274 (IGFD…QFTQ), 307–337 (INDN…NINR), 396–430 (SDNN…DPNY), 468–498 (PKLT…TIYS), and 535–564 (TNKS…DNNL).

The sequence is that of Putative ankyrin repeat protein R734 from Acanthamoeba polyphaga mimivirus (APMV).